A 62-amino-acid polypeptide reads, in one-letter code: uncharacterized protein (62 aa).

This is an uncharacterized protein from Bacillus subtilis (strain 168).